A 471-amino-acid chain; its full sequence is MAAPMLRHLCRVPQSGVWTRGPRAVRPGARGMLVAPRARGLFKEFFPESGTKTELPELFDRRRAGSPQTVYCGFDPTGDSLHVGHLLTLLGLFHFQRAGHNVIALVGGSTALLGDPSGRTKEREALSAECVRANARALQRGLETLAANHARLFADGRPWGTFTVLDNAAWFQKQHLMDFLATVGGHFRMGTLLSRLSVQSRLKSPEGMSLAEFFYQVLQAYDFYYLFRHYGCRVQLGGSDQLGNIMSGYEFIHKLTGEDVFGITVPLITSTTGAKLGKSAGNAVWLNREKTSPFELYQFFIRQQDDSVERYLKLFTFLPLPEIDHIMQLHVKEPEKRIAQKRLAAEVTKLVHGQEGLDSAKRCTQALYHSSIEALEVMSDQELKELFKEASFSELVLDPGTSVIDTCRKANAIPDGPRGYRMITEGGVSINHRQVTNPESVLVIGQHILKNGLSLLKIGKRNFYIIKWLQL.

L-tyrosine is bound at residue tyrosine 71. Position 75 (aspartate 75) interacts with ATP. The 'HIGH' region signature appears at 76-85 (PTGDSLHVGH). Residues aspartate 115, tyrosine 215, glutamine 219, aspartate 222, and glutamine 241 each contribute to the L-tyrosine site. ATP-binding residues include isoleucine 268 and lysine 278. A 'KMSKS' region motif is present at residues 275-279 (KLGKS). 2 positions are modified to N6-acetyllysine: lysine 349 and lysine 361.

Belongs to the class-I aminoacyl-tRNA synthetase family. In terms of assembly, homodimer.

The protein resides in the mitochondrion matrix. The enzyme catalyses tRNA(Tyr) + L-tyrosine + ATP = L-tyrosyl-tRNA(Tyr) + AMP + diphosphate + H(+). Functionally, catalyzes the attachment of tyrosine to tRNA(Tyr) in a two-step reaction: tyrosine is first activated by ATP to form Tyr-AMP and then transferred to the acceptor end of tRNA(Tyr). In Rattus norvegicus (Rat), this protein is Tyrosine--tRNA ligase, mitochondrial (Yars2).